Reading from the N-terminus, the 468-residue chain is Uronate isomerase (468 aa).

Belongs to the metallo-dependent hydrolases superfamily. Uronate isomerase family.

It carries out the reaction D-glucuronate = D-fructuronate. The catalysed reaction is aldehydo-D-galacturonate = keto-D-tagaturonate. The protein operates within carbohydrate metabolism; pentose and glucuronate interconversion. The sequence is that of Uronate isomerase from Brachyspira hyodysenteriae (strain ATCC 49526 / WA1).